A 664-amino-acid polypeptide reads, in one-letter code: Glycine--tRNA ligase beta subunit (664 aa).

The protein belongs to the class-II aminoacyl-tRNA synthetase family. In terms of assembly, tetramer of two alpha and two beta subunits.

The protein localises to the cytoplasm. It carries out the reaction tRNA(Gly) + glycine + ATP = glycyl-tRNA(Gly) + AMP + diphosphate. The polypeptide is Glycine--tRNA ligase beta subunit (Rickettsia typhi (strain ATCC VR-144 / Wilmington)).